The sequence spans 231 residues: GrpE protein homolog, mitochondrial (231 aa).

The tract at residues 49 to 71 (SEKAGEKAEEKAEEQNLSAEEQK) is disordered.

It belongs to the GrpE family. In terms of assembly, component of the PAM complex, at least composed of mtHsp70, MGE1, TIM44, PAM16, PAM17 and PAM18.

It localises to the mitochondrion matrix. Functionally, essential component of the PAM complex, a complex required for the translocation of transit peptide-containing proteins from the inner membrane into the mitochondrial matrix in an ATP-dependent manner. Seems to control the nucleotide-dependent binding of SSC1 to substrate proteins. In Candida glabrata (strain ATCC 2001 / BCRC 20586 / JCM 3761 / NBRC 0622 / NRRL Y-65 / CBS 138) (Yeast), this protein is GrpE protein homolog, mitochondrial (mge1).